The following is a 301-amino-acid chain: Probable alpha-L-glutamate ligase (301 aa).

One can recognise an ATP-grasp domain in the interval 104-287 (TQLLARKGIG…IAGTIYAFLE (184 aa)). ATP contacts are provided by residues Lys141, 178–179 (EY), Asp187, and 211–213 (RSN). Mg(2+)-binding residues include Asp248, Glu260, and Asn262. Mn(2+) is bound by residues Asp248, Glu260, and Asn262.

Belongs to the RimK family. The cofactor is Mg(2+). Mn(2+) is required as a cofactor.

This is Probable alpha-L-glutamate ligase from Alkalilimnicola ehrlichii (strain ATCC BAA-1101 / DSM 17681 / MLHE-1).